The following is a 320-amino-acid chain: Sensor histidine kinase YbdK (320 aa).

The chain crosses the membrane as a helical span at residues 1 to 21 (MLLFTAVISVPMLLLAVSVLM). The Extracellular segment spans residues 22 to 41 (SVIYDSMFKPMNHGMPFHRS). The helical transmembrane segment at 42 to 62 (FAYPAMIVVFLISLLLLAFLF) threads the bilayer. Residues 63–320 (SKSIHSLLHK…NGTGFLFSKE (258 aa)) are Cytoplasmic-facing. In terms of domain architecture, HAMP spans 67–120 (HSLLHKINLLNQTIRHLASDQRVPDKIEVKRADEIGELIKSVNLLIERTTYREL). One can recognise a Histidine kinase domain in the interval 135 to 320 (KLRHDINTPL…NGTGFLFSKE (186 aa)). Phosphohistidine; by autocatalysis is present on His138.

The protein localises to the cell membrane. The enzyme catalyses ATP + protein L-histidine = ADP + protein N-phospho-L-histidine.. Its function is as follows. Member of the two-component regulatory system YbdK/YbdJ. Probably activates YbdJ by phosphorylation. This is Sensor histidine kinase YbdK (ybdK) from Bacillus subtilis (strain 168).